Consider the following 294-residue polypeptide: Protoheme IX farnesyltransferase (294 aa).

9 helical membrane-spanning segments follow: residues 24 to 44, 48 to 68, 96 to 116, 118 to 138, 145 to 165, 172 to 192, 224 to 244, 245 to 265, and 268 to 288; these read VVLL…PGWV, LIAF…AINH, ALWF…LFVN, LTAL…TGYL, NIVI…TAVT, ALLL…ALAI, VLLL…WIYL, LGAL…YFTD, and VVAM…FVFL.

Belongs to the UbiA prenyltransferase family. Protoheme IX farnesyltransferase subfamily.

Its subcellular location is the cell inner membrane. The enzyme catalyses heme b + (2E,6E)-farnesyl diphosphate + H2O = Fe(II)-heme o + diphosphate. It functions in the pathway porphyrin-containing compound metabolism; heme O biosynthesis; heme O from protoheme: step 1/1. In terms of biological role, converts heme B (protoheme IX) to heme O by substitution of the vinyl group on carbon 2 of heme B porphyrin ring with a hydroxyethyl farnesyl side group. This chain is Protoheme IX farnesyltransferase, found in Legionella pneumophila (strain Corby).